The sequence spans 240 residues: Ribosomal RNA small subunit methyltransferase G (240 aa).

Residues Gly80, Phe85, 103 to 105 (DSS), 131 to 132 (AE), and Arg150 each bind S-adenosyl-L-methionine.

Belongs to the methyltransferase superfamily. RNA methyltransferase RsmG family.

Its subcellular location is the cytoplasm. Specifically methylates the N7 position of a guanine in 16S rRNA. The chain is Ribosomal RNA small subunit methyltransferase G from Thermoanaerobacter pseudethanolicus (strain ATCC 33223 / 39E) (Clostridium thermohydrosulfuricum).